The following is a 179-amino-acid chain: Cellular nucleic acid-binding protein homolog (179 aa).

7 consecutive CCHC-type zinc fingers follow at residues 17-34, 36-53, 58-75, 83-100, 116-133, 135-152, and 157-174; these read PRCYNCGENGHQARECTK, SICYNCNQTGHKASECTE, KTCYACGTAGHLVRDCPS, AECYKCGRVGHIARDCRT, MNCYACGSYGHQARDCTM, VKCYSCGKIGHRSFECQQ, and QLCYKCNQPGHIAVNCTS.

This sequence to human CNBP and to retroviral nucleic acid binding proteins (NBP). In terms of processing, phosphorylated.

It is found in the nucleus. In terms of biological role, acts in the sexual differentiation pathway. Is required for efficient conjugation. Double-stranded DNA-binding protein. In Schizosaccharomyces pombe (strain 972 / ATCC 24843) (Fission yeast), this protein is Cellular nucleic acid-binding protein homolog (byr3).